Consider the following 608-residue polypeptide: ESX-3 secretion system protein EccA3 (608 aa).

The tract at residues 284 to 303 (EARSDPWDPETEPSEAEFVD) is disordered. Acidic residues predominate over residues 290-301 (WDPETEPSEAEF). Residue 365–372 (GPPGTGKT) participates in ATP binding.

This sequence belongs to the CbxX/CfxQ family. Part of the ESX-3 / type VII secretion system (T7SS), which is composed of cytosolic and membrane components.

It is found in the cytoplasm. Part of the ESX-3 specialized secretion system, which is required for siderophore-mediated iron acquisition and for the secretion of EsxH and EsxG. EccA3 exhibits ATPase activity and may provide energy for the export of ESX-3 substrates. This is ESX-3 secretion system protein EccA3 from Mycolicibacterium smegmatis (strain ATCC 700084 / mc(2)155) (Mycobacterium smegmatis).